The primary structure comprises 576 residues: Sulfite reductase [NADPH] hemoprotein beta-component (576 aa).

Residues 1–12 (MNVKTEPDRSRD) are compositionally biased toward basic and acidic residues. The segment at 1-25 (MNVKTEPDRSRDVSQPLDKLGPDET) is disordered. [4Fe-4S] cluster-binding residues include C441, C447, C486, and C490. C490 contributes to the siroheme binding site.

This sequence belongs to the nitrite and sulfite reductase 4Fe-4S domain family. Alpha(8)-beta(8). The alpha component is a flavoprotein, the beta component is a hemoprotein. The cofactor is siroheme. Requires [4Fe-4S] cluster as cofactor.

It carries out the reaction hydrogen sulfide + 3 NADP(+) + 3 H2O = sulfite + 3 NADPH + 4 H(+). The protein operates within sulfur metabolism; hydrogen sulfide biosynthesis; hydrogen sulfide from sulfite (NADPH route): step 1/1. In terms of biological role, component of the sulfite reductase complex that catalyzes the 6-electron reduction of sulfite to sulfide. This is one of several activities required for the biosynthesis of L-cysteine from sulfate. This chain is Sulfite reductase [NADPH] hemoprotein beta-component, found in Nitrobacter hamburgensis (strain DSM 10229 / NCIMB 13809 / X14).